Here is a 474-residue protein sequence, read N- to C-terminus: Glutamate--tRNA ligase (474 aa).

The short motif at 11–21 (PSPTGFLHIGG) is the 'HIGH' region element. Positions 240–244 (KLSKR) match the 'KMSKS' region motif. K243 provides a ligand contact to ATP.

This sequence belongs to the class-I aminoacyl-tRNA synthetase family. Glutamate--tRNA ligase type 1 subfamily. In terms of assembly, monomer.

Its subcellular location is the cytoplasm. The catalysed reaction is tRNA(Glu) + L-glutamate + ATP = L-glutamyl-tRNA(Glu) + AMP + diphosphate. In terms of biological role, catalyzes the attachment of glutamate to tRNA(Glu) in a two-step reaction: glutamate is first activated by ATP to form Glu-AMP and then transferred to the acceptor end of tRNA(Glu). This chain is Glutamate--tRNA ligase, found in Nitrobacter winogradskyi (strain ATCC 25391 / DSM 10237 / CIP 104748 / NCIMB 11846 / Nb-255).